Here is a 442-residue protein sequence, read N- to C-terminus: Probable glycine dehydrogenase (decarboxylating) subunit 1 (442 aa).

It belongs to the GcvP family. N-terminal subunit subfamily. The glycine cleavage system is composed of four proteins: P, T, L and H. In this organism, the P 'protein' is a heterodimer of two subunits.

The enzyme catalyses N(6)-[(R)-lipoyl]-L-lysyl-[glycine-cleavage complex H protein] + glycine + H(+) = N(6)-[(R)-S(8)-aminomethyldihydrolipoyl]-L-lysyl-[glycine-cleavage complex H protein] + CO2. The glycine cleavage system catalyzes the degradation of glycine. The P protein binds the alpha-amino group of glycine through its pyridoxal phosphate cofactor; CO(2) is released and the remaining methylamine moiety is then transferred to the lipoamide cofactor of the H protein. The protein is Probable glycine dehydrogenase (decarboxylating) subunit 1 of Geotalea uraniireducens (strain Rf4) (Geobacter uraniireducens).